A 217-amino-acid chain; its full sequence is Homologous-pairing protein 2 homolog (217 aa).

Residues I93–H153 adopt a coiled-coil conformation. A DNA-binding region spans residues S118–E182.

Belongs to the HOP2 family. Interacts with the DNA-binding domain of the nuclear receptors NR3C1/GR, ESR2/ER-beta, THRB and RXRA. Forms a stable heterodimer with MND1. Interacts with PSMC3/TBP1. In terms of processing, PTM: Phosphorylated by PKA, PKC and MAPK. In terms of tissue distribution, highly expressed in testis and colon.

It localises to the nucleus. Functionally, plays an important role in meiotic recombination. Stimulates DMC1-mediated strand exchange required for pairing homologous chromosomes during meiosis. The complex PSMC3IP/MND1 binds DNA, stimulates the recombinase activity of DMC1 as well as DMC1 D-loop formation from double-strand DNA. This complex stabilizes presynaptic RAD51 and DMC1 filaments formed on single strand DNA to capture double-strand DNA. This complex stimulates both synaptic and presynaptic critical steps in RAD51 and DMC1-promoted homologous pairing. May inhibit HIV-1 viral protein TAT activity and modulate the activity of proteasomes through association with PSMC3. Acts as a tissue specific coactivator of hormone-dependent transcription mediated by nuclear receptors. The chain is Homologous-pairing protein 2 homolog (PSMC3IP) from Homo sapiens (Human).